A 388-amino-acid chain; its full sequence is Chorismate synthase (388 aa).

NADP(+)-binding residues include Arg39 and Arg45. FMN is bound by residues 130–132 (RSS), 251–252 (NA), Gly296, 311–315 (KPIPT), and Arg337.

It belongs to the chorismate synthase family. In terms of assembly, homotetramer. FMNH2 serves as cofactor.

It carries out the reaction 5-O-(1-carboxyvinyl)-3-phosphoshikimate = chorismate + phosphate. It functions in the pathway metabolic intermediate biosynthesis; chorismate biosynthesis; chorismate from D-erythrose 4-phosphate and phosphoenolpyruvate: step 7/7. Functionally, catalyzes the anti-1,4-elimination of the C-3 phosphate and the C-6 proR hydrogen from 5-enolpyruvylshikimate-3-phosphate (EPSP) to yield chorismate, which is the branch point compound that serves as the starting substrate for the three terminal pathways of aromatic amino acid biosynthesis. This reaction introduces a second double bond into the aromatic ring system. This is Chorismate synthase from Streptococcus uberis (strain ATCC BAA-854 / 0140J).